The sequence spans 444 residues: tRNA (guanine-N(7)-)-methyltransferase non-catalytic subunit TRM82 (444 aa).

WD repeat units follow at residues 1 to 47, 48 to 99, 100 to 147, 148 to 192, 193 to 237, 238 to 279, and 308 to 354; these read MSVI…WSDD, FDKI…LGAP, PIYS…KRFC, FSKR…EPIL, GHVS…DKWL, FGHK…STFD, and FAVS…ITFP. Residues 55-92 are disordered; sequence RNTTAKEQQGQSSENENENKKLKSNKGDSIKRTAAKVP. Residues 71–85 show a composition bias toward basic and acidic residues; it reads NENKKLKSNKGDSIK. A Phosphoserine modification is found at serine 93.

It belongs to the WD repeat TRM82 family. Forms a heterodimer with the catalytic subunit TRM8.

Its subcellular location is the nucleus. Its pathway is tRNA modification; N(7)-methylguanine-tRNA biosynthesis. In terms of biological role, required for the formation of N(7)-methylguanine at position 46 (m7G46) in tRNA, a modification required to maintain stability of tRNAs; its absence resulting in tRNA decay. In the complex, it is required to stabilize and induce conformational changes of the catalytic subunit. The sequence is that of tRNA (guanine-N(7)-)-methyltransferase non-catalytic subunit TRM82 from Saccharomyces cerevisiae (strain ATCC 204508 / S288c) (Baker's yeast).